We begin with the raw amino-acid sequence, 380 residues long: DNA replication and repair protein RecF (380 aa).

30 to 37 serves as a coordination point for ATP; the sequence is GPNGFGKT.

This sequence belongs to the RecF family.

It is found in the cytoplasm. In terms of biological role, the RecF protein is involved in DNA metabolism; it is required for DNA replication and normal SOS inducibility. RecF binds preferentially to single-stranded, linear DNA. It also seems to bind ATP. This chain is DNA replication and repair protein RecF, found in Mycobacterium sp. (strain JLS).